We begin with the raw amino-acid sequence, 172 residues long: 6,7-dimethyl-8-ribityllumazine synthase (172 aa).

Residues phenylalanine 24, 58–60 (ALE), and 82–84 (AVI) each bind 5-amino-6-(D-ribitylamino)uracil. 87–88 (ET) serves as a coordination point for (2S)-2-hydroxy-3-oxobutyl phosphate. Histidine 90 serves as the catalytic Proton donor. Asparagine 115 contacts 5-amino-6-(D-ribitylamino)uracil. A (2S)-2-hydroxy-3-oxobutyl phosphate-binding site is contributed by arginine 129. The disordered stretch occupies residues 150–172 (ALDQLGDDDEDEEEDEDDEEERA). Residues 154–172 (LGDDDEDEEEDEDDEEERA) are compositionally biased toward acidic residues.

Belongs to the DMRL synthase family.

It catalyses the reaction (2S)-2-hydroxy-3-oxobutyl phosphate + 5-amino-6-(D-ribitylamino)uracil = 6,7-dimethyl-8-(1-D-ribityl)lumazine + phosphate + 2 H2O + H(+). The protein operates within cofactor biosynthesis; riboflavin biosynthesis; riboflavin from 2-hydroxy-3-oxobutyl phosphate and 5-amino-6-(D-ribitylamino)uracil: step 1/2. Catalyzes the formation of 6,7-dimethyl-8-ribityllumazine by condensation of 5-amino-6-(D-ribitylamino)uracil with 3,4-dihydroxy-2-butanone 4-phosphate. This is the penultimate step in the biosynthesis of riboflavin. The sequence is that of 6,7-dimethyl-8-ribityllumazine synthase from Burkholderia multivorans (strain ATCC 17616 / 249).